The chain runs to 172 residues: LOB domain-containing protein 4 (172 aa).

One can recognise an LOB domain in the interval 12–113 (SPCAACKLLR…AQLALAQAEV (102 aa)). The tract at residues 125–152 (PGHGLCPDSPSSSGSPSSKQVSPQDNKG) is disordered. Positions 131–147 (PDSPSSSGSPSSKQVSP) are enriched in low complexity.

It belongs to the LOB domain-containing protein family. In terms of tissue distribution, expressed in young shoots, roots, stems, leaves and flowers.

This is LOB domain-containing protein 4 (LBD4) from Arabidopsis thaliana (Mouse-ear cress).